Reading from the N-terminus, the 74-residue chain is High-potential iron-sulfur protein isozyme 2 (74 aa).

[4Fe-4S] cluster is bound by residues C36, C39, C53, and C67.

In terms of assembly, homodimer.

Its function is as follows. Specific class of high-redox-potential 4Fe-4S ferredoxins. Functions in anaerobic electron transport in most purple and in some other photosynthetic bacteria and in at least one genus (Paracoccus) of halophilic, denitrifying bacteria. This Ectothiorhodospira mobilis protein is High-potential iron-sulfur protein isozyme 2.